The primary structure comprises 299 residues: GTPase Era (299 aa).

The region spanning 4–171 (KSGFVAILGR…IKLLTDNLEE (168 aa)) is the Era-type G domain. The G1 stretch occupies residues 12–19 (GRPNVGKS). 12-19 (GRPNVGKS) provides a ligand contact to GTP. Residues 38 to 42 (QTTRN) form a G2 region. The G3 stretch occupies residues 59-62 (DTPG). GTP is bound by residues 59 to 63 (DTPGI) and 121 to 124 (NKID). The G4 stretch occupies residues 121-124 (NKID). Residues 150-152 (ISA) are G5. The KH type-2 domain occupies 202 to 280 (TQQEVPHSVA…YLETWVKVKK (79 aa)).

The protein belongs to the TRAFAC class TrmE-Era-EngA-EngB-Septin-like GTPase superfamily. Era GTPase family. As to quaternary structure, monomer.

The protein resides in the cytoplasm. Its subcellular location is the cell membrane. Its function is as follows. An essential GTPase that binds both GDP and GTP, with rapid nucleotide exchange. Plays a role in 16S rRNA processing and 30S ribosomal subunit biogenesis and possibly also in cell cycle regulation and energy metabolism. This chain is GTPase Era, found in Streptococcus agalactiae serotype III (strain NEM316).